Reading from the N-terminus, the 796-residue chain is Volume-regulated anion channel subunit LRRC8E (796 aa).

Residues 1–22 (MIPVAEFKQFTEQQPAFKVLKP) lie on the Cytoplasmic side of the membrane. Residues 23-43 (WWDVLAEYLTVAMLMIGVFGC) form a helical membrane-spanning segment. Residues 44-116 (TLQVTQDKII…YETALHWYAK (73 aa)) are Extracellular-facing. Cys54 and Cys301 are joined by a disulfide. A glycan (N-linked (GlcNAc...) asparagine) is linked at Asn63. A helical membrane pass occupies residues 117–137 (YFPYLVVIHTLIFMVCTSFWF). Residues 138–265 (KFPGTSSKIE…IRQTVLKVCK (128 aa)) lie on the Cytoplasmic side of the membrane. The chain crosses the membrane as a helical span at residues 266–286 (FLAILVYNLVYVEKISFLVAC). Residues 287–313 (RVETSEVTGYASFCCNHTKAHLFSKLA) lie on the Extracellular side of the membrane. An N-linked (GlcNAc...) asparagine glycan is attached at Asn302. The helical transmembrane segment at 314–334 (FCYISFVCIYGLTCIYTLYWL) threads the bilayer. Over 335–796 (FHRPLKEYSF…AEVRDKMEEE (462 aa)) the chain is Cytoplasmic. LRR repeat units follow at residues 508–529 (GLEE…ATLE), 536–557 (QLKV…TDVA), 559–579 (HLQR…NSLK), 583–604 (ALRE…VFSL), 606–627 (ALQE…LSFQ), 631–652 (KLVT…VRKL), 654–675 (SLEQ…LGLC), 677–698 (GLRL…VGLL), 700–721 (NLQH…LFFC), 723–744 (KLRT…VGAL), and 746–767 (ALSR…LGNC).

Belongs to the LRRC8 family. As to quaternary structure, heterohexamer; oligomerizes with other LRRC8 proteins (LRRC8A, LRRC8C, LRRC8D and/or LRRC8B) to form a heterohexamer. In vivo, the subunit composition may depend primarily on expression levels, and heterooligomeric channels containing various proportions of the different LRRC8 proteins may coexist.

Its subcellular location is the cell membrane. It is found in the endoplasmic reticulum membrane. The protein localises to the lysosome membrane. It carries out the reaction chloride(in) = chloride(out). It catalyses the reaction iodide(out) = iodide(in). The catalysed reaction is taurine(out) = taurine(in). The enzyme catalyses 2',3'-cGAMP(out) = 2',3'-cGAMP(in). Non-essential component of the volume-regulated anion channel (VRAC, also named VSOAC channel), an anion channel required to maintain a constant cell volume in response to extracellular or intracellular osmotic changes. The VRAC channel conducts iodide better than chloride and can also conduct organic osmolytes like taurine. Mediates efflux of amino acids, such as aspartate, in response to osmotic stress. The VRAC channel also mediates transport of immunoreactive cyclic dinucleotide GMP-AMP (2'-3'-cGAMP), an immune messenger produced in response to DNA virus in the cytosol. Channel activity requires LRRC8A plus at least one other family member (LRRC8B, LRRC8C, LRRC8D or LRRC8E); channel characteristics depend on the precise subunit composition. Also plays a role in lysosome homeostasis by forming functional lysosomal VRAC channels in response to low cytoplasmic ionic strength condition: lysosomal VRAC channels are necessary for the formation of large lysosome-derived vacuoles, which store and then expel excess water to maintain cytosolic water homeostasis. The polypeptide is Volume-regulated anion channel subunit LRRC8E (Homo sapiens (Human)).